The chain runs to 315 residues: Sulfate adenylyltransferase subunit 2 1 (315 aa).

The interval 287 to 315 is disordered; it reads DSSSSERQGRAIDHDQSGSMERKKREGYF. The segment covering 293–315 has biased composition (basic and acidic residues); it reads RQGRAIDHDQSGSMERKKREGYF.

Belongs to the PAPS reductase family. CysD subfamily. As to quaternary structure, heterodimer composed of CysD, the smaller subunit, and CysN.

It catalyses the reaction sulfate + ATP + H(+) = adenosine 5'-phosphosulfate + diphosphate. The protein operates within sulfur metabolism; hydrogen sulfide biosynthesis; sulfite from sulfate: step 1/3. With CysN forms the ATP sulfurylase (ATPS) that catalyzes the adenylation of sulfate producing adenosine 5'-phosphosulfate (APS) and diphosphate, the first enzymatic step in sulfur assimilation pathway. APS synthesis involves the formation of a high-energy phosphoric-sulfuric acid anhydride bond driven by GTP hydrolysis by CysN coupled to ATP hydrolysis by CysD. The sequence is that of Sulfate adenylyltransferase subunit 2 1 from Alkalilimnicola ehrlichii (strain ATCC BAA-1101 / DSM 17681 / MLHE-1).